A 50-amino-acid polypeptide reads, in one-letter code: Large ribosomal subunit protein eL39 (50 aa).

It belongs to the eukaryotic ribosomal protein eL39 family.

The chain is Large ribosomal subunit protein eL39 from Methanoculleus marisnigri (strain ATCC 35101 / DSM 1498 / JR1).